The sequence spans 388 residues: Lipid-A-disaccharide synthase (388 aa).

It belongs to the LpxB family.

The enzyme catalyses a lipid X + a UDP-2-N,3-O-bis[(3R)-3-hydroxyacyl]-alpha-D-glucosamine = a lipid A disaccharide + UDP + H(+). Its pathway is bacterial outer membrane biogenesis; LPS lipid A biosynthesis. Functionally, condensation of UDP-2,3-diacylglucosamine and 2,3-diacylglucosamine-1-phosphate to form lipid A disaccharide, a precursor of lipid A, a phosphorylated glycolipid that anchors the lipopolysaccharide to the outer membrane of the cell. The sequence is that of Lipid-A-disaccharide synthase from Burkholderia mallei (strain ATCC 23344).